A 375-amino-acid chain; its full sequence is uncharacterized protein (375 aa).

Positions Met1–Cys20 are cleaved as a signal peptide. The Extracellular segment spans residues Gln21–Pro335. A compositionally biased stretch (low complexity) spans Pro30–Gln42. Disordered regions lie at residues Pro30 to Gln74 and Ser113 to His253. Basic residues predominate over residues Pro43–His53. The span at Gln54 to Gln74 shows a compositional bias: low complexity. Positions Pro120–Gly151 are enriched in basic residues. Residues Gly168 to Val180 are compositionally biased toward polar residues. A compositionally biased stretch (low complexity) spans Asn181–Ile220. The helical transmembrane segment at Ile336–Phe356 threads the bilayer. Topologically, residues Lys357 to Leu375 are cytoplasmic.

It is found in the membrane. This is an uncharacterized protein from Dictyostelium discoideum (Social amoeba).